The chain runs to 902 residues: Androgen receptor (902 aa).

A modulating region spans residues 1–540 (MEVQLGLGRV…PIDYYFPPQK (540 aa)). The tract at residues 1 to 569 (MEVQLGLGRV…GSCKVFFKRA (569 aa)) is interaction with ZNF318. Disordered stretches follow at residues 35-146 (QNPG…LSLL) and 194-224 (QQEVISEGSSSVRAREATGAPSSSKDSYLGG). A Phosphoserine; by CDK9 modification is found at serine 61. Serine 75 is modified (phosphoserine). Positions 94-103 (QPSQQQSASE) are enriched in low complexity. Polar residues-rich tracts occupy residues 196 to 205 (EVISEGSSSV) and 213 to 224 (APSSSKDSYLGG). Residue tyrosine 221 is modified to Phosphotyrosine; by CSK. Phosphoserine is present on serine 254. A Phosphotyrosine; by CSK and TNK2 modification is found at tyrosine 265. At serine 290 the chain carries Phosphoserine. Phosphotyrosine; by CSK occurs at positions 305, 344, 355, and 360. Tyrosine 361 bears the Phosphotyrosine; by CSK and TNK2 mark. A Glycyl lysine isopeptide (Lys-Gly) (interchain with G-Cter in SUMO) cross-link involves residue lysine 384. At tyrosine 391 the chain carries Phosphotyrosine; by CSK. The segment at 439–465 (EGQLYGPGGGGGSSSPSDAGPVAPYGY) is disordered. Residue lysine 503 forms a Glycyl lysine isopeptide (Lys-Gly) (interchain with G-Cter in SUMO) linkage. A phosphotyrosine; by CSK mark is found at tyrosine 517 and tyrosine 534. Residues 534–901 (YYFPPQKTCL…GKVKPIYFHT (368 aa)) form an interaction with LPXN region. A DNA-binding region (nuclear receptor) is located at residues 541–614 (TCLICGDEAS…AGMTLGARKL (74 aa)). 2 NR C4-type zinc fingers span residues 542–562 (CLICGDEASGCHYGALTCGSC) and 578–602 (CASRNDCTIDKFRRKNCPSCRLRKC). An interaction with HIPK3 region spans residues 554–644 (YGALTCGSCK…TEDPSQKMTV (91 aa)). Residues 574–901 (QKYLCASRND…GKVKPIYFHT (328 aa)) are interaction with CCAR1. The interaction with KAT7 stretch occupies residues 607-901 (MTLGARKLKK…GKVKPIYFHT (295 aa)). At serine 633 the chain carries Phosphoserine. One can recognise an NR LBD domain in the interval 651–882 (ECQPIFLNVL…DFPEMMAEII (232 aa)). The 17beta-hydroxy-5alpha-androstan-3-one site is built by asparagine 688 and arginine 735. Residues lysine 828 and lysine 830 each participate in a glycyl lysine isopeptide (Lys-Gly) (interchain with G-Cter in ubiquitin) cross-link. Threonine 860 provides a ligand contact to 17beta-hydroxy-5alpha-androstan-3-one. Tyrosine 898 is subject to Phosphotyrosine; by CSK.

This sequence belongs to the nuclear hormone receptor family. NR3 subfamily. In terms of assembly, binds DNA as a homodimer. Part of a ternary complex containing AR, EFCAB6/DJBP and PARK7. Interacts with HIPK3 and NR0B2 in the presence of androgen. The ligand binding domain interacts with KAT7/HBO1 in the presence of dihydrotestosterone. Interacts with EFCAB6/DJBP, PQBP1, RANBP9, RBAK, SPDEF, SRA1, TGFB1I1, ZNF318 and RREB1. Interacts with ZMIZ1/ZIMP10 and ZMIZ2/ZMIP7 which both enhance its transactivation activity. Interacts with SLC30A9 and RAD54L2/ARIP4. Interacts with MACROD1 (via macro domain). Interacts via the ligand-binding domain with LXXLL and FXXLF motifs from NCOA1, NCOA2, NCOA3 and MAGEA11. Interacts (via nuclear receptor DNA binding domain and nuclear receptor ligand binding domain) with NCOA4. The AR N-terminal poly-Gln region binds Ran resulting in enhancement of AR-mediated transactivation. Ran-binding decreases as the poly-Gln length increases. Interacts with HIP1 (via coiled coil domain). Interacts (via ligand-binding domain) with TRIM68. Interacts with TNK2. Interacts with USP26. Interacts with RNF6. Interacts (regulated by RNF6 probably through polyubiquitination) with RNF14; regulates AR transcriptional activity. Interacts with PRMT2 and TRIM24. Interacts with RACK1. Interacts with RANBP10; this interaction enhances dihydrotestosterone-induced AR transcriptional activity. Interacts with PRPF6 in a hormone-independent way; this interaction enhances dihydrotestosterone-induced AR transcriptional activity. Interacts with STK4/MST1. Interacts with ZIPK/DAPK3. Interacts with LPXN. Interacts with MAK. Part of a complex containing AR, MAK and NCOA3. Interacts with CRY1. Interacts with CCAR1 and GATA2. Interacts with BUD31. Interacts with ARID4A. Interacts with ARID4B. Interacts (via NR LBD domain) with ZBTB7A; the interaction is direct and androgen-dependent. Interacts with NCOR1. Interacts with NCOR2. Interacts with CRY2 in a ligand-dependent manner. Phosphorylated in prostate cancer cells in response to several growth factors including EGF. Phosphorylation is induced by c-Src kinase (CSK). Tyr-517 is one of the major phosphorylation sites and an increase in phosphorylation and Src kinase activity is associated with prostate cancer progression. Phosphorylation by TNK2 enhances the DNA-binding and transcriptional activity. Phosphorylation at Ser-61 by CDK9 regulates AR promoter selectivity and cell growth. Phosphorylation by PAK6 leads to AR-mediated transcription inhibition. Post-translationally, sumoylated on Lys-384 (major) and Lys-503. Ubiquitinated. Deubiquitinated by USP26. 'Lys-6' and 'Lys-27'-linked polyubiquitination by RNF6 modulates AR transcriptional activity and specificity. In terms of processing, palmitoylated by ZDHHC7 and ZDHHC21. Palmitoylation is required for plasma membrane targeting and for rapid intracellular signaling via ERK and AKT kinases and cAMP generation. In terms of tissue distribution, highest levels in the seminal vesicle, ventral prostate and coagulating gland with lower levels in the kidney and levator ani muscle.

Its subcellular location is the nucleus. The protein localises to the cytoplasm. Functionally, steroid hormone receptors are ligand-activated transcription factors that regulate eukaryotic gene expression and affect cellular proliferation and differentiation in target tissues. Transcription factor activity is modulated by bound coactivator and corepressor proteins like ZBTB7A that recruits NCOR1 and NCOR2 to the androgen response elements/ARE on target genes, negatively regulating androgen receptor signaling and androgen-induced cell proliferation. Transcription activation is also down-regulated by NR0B2. Activated, but not phosphorylated, by HIPK3 and ZIPK/DAPK3. This is Androgen receptor (Ar) from Rattus norvegicus (Rat).